The sequence spans 327 residues: DNA-directed RNA polymerase subunit alpha (327 aa).

Positions 1–233 are alpha N-terminal domain (alpha-NTD); the sequence is MVREKVKVST…NLFIPFLHVE (233 aa). The alpha C-terminal domain (alpha-CTD) stretch occupies residues 267-327; it reads LAFQYIFIDQ…KKILDILEKK (61 aa).

It belongs to the RNA polymerase alpha chain family. In plastids the minimal PEP RNA polymerase catalytic core is composed of four subunits: alpha, beta, beta', and beta''. When a (nuclear-encoded) sigma factor is associated with the core the holoenzyme is formed, which can initiate transcription.

It localises to the plastid. Its subcellular location is the chloroplast. It carries out the reaction RNA(n) + a ribonucleoside 5'-triphosphate = RNA(n+1) + diphosphate. Its function is as follows. DNA-dependent RNA polymerase catalyzes the transcription of DNA into RNA using the four ribonucleoside triphosphates as substrates. The polypeptide is DNA-directed RNA polymerase subunit alpha (Crucihimalaya wallichii (Rock-cress)).